Here is a 73-residue protein sequence, read N- to C-terminus: Mucroporin-like peptide (73 aa).

Residues 1–22 (MKVKCLLAVFLIVLIAAEHCQA) form the signal peptide. The residue at position 38 (lysine 38) is a Lysine amide. Positions 44 to 73 (ELGTQFQPRQKNFMRREVDLERLFAEMPDY) are excised as a propeptide.

This sequence belongs to the non-disulfide-bridged peptide (NDBP) superfamily. Short antimicrobial peptide (group 4) family. As to expression, expressed by the venom gland.

The protein localises to the secreted. Its subcellular location is the target cell membrane. Functionally, cationic host defense peptide that have antibacterial activity by breaking membranes. Is more effective on Gram-positive than on Gram-negative bacteria. This Lychas mucronatus (Chinese swimming scorpion) protein is Mucroporin-like peptide.